Consider the following 141-residue polypeptide: Transcription antitermination protein NusB (141 aa).

Belongs to the NusB family.

Functionally, involved in transcription antitermination. Required for transcription of ribosomal RNA (rRNA) genes. Binds specifically to the boxA antiterminator sequence of the ribosomal RNA (rrn) operons. In Neisseria meningitidis serogroup A / serotype 4A (strain DSM 15465 / Z2491), this protein is Transcription antitermination protein NusB.